Reading from the N-terminus, the 511-residue chain is Bifunctional purine biosynthesis protein PurH (511 aa).

The 145-residue stretch at methionine 1–valine 145 folds into the MGS-like domain.

The protein belongs to the PurH family.

It catalyses the reaction (6R)-10-formyltetrahydrofolate + 5-amino-1-(5-phospho-beta-D-ribosyl)imidazole-4-carboxamide = 5-formamido-1-(5-phospho-D-ribosyl)imidazole-4-carboxamide + (6S)-5,6,7,8-tetrahydrofolate. It carries out the reaction IMP + H2O = 5-formamido-1-(5-phospho-D-ribosyl)imidazole-4-carboxamide. Its pathway is purine metabolism; IMP biosynthesis via de novo pathway; 5-formamido-1-(5-phospho-D-ribosyl)imidazole-4-carboxamide from 5-amino-1-(5-phospho-D-ribosyl)imidazole-4-carboxamide (10-formyl THF route): step 1/1. It participates in purine metabolism; IMP biosynthesis via de novo pathway; IMP from 5-formamido-1-(5-phospho-D-ribosyl)imidazole-4-carboxamide: step 1/1. This chain is Bifunctional purine biosynthesis protein PurH, found in Bacillus cereus (strain ZK / E33L).